A 132-amino-acid polypeptide reads, in one-letter code: Fluoride-specific ion channel FluC 1 (132 aa).

4 helical membrane passes run 9–29 (LAAV…LSAL), 35–55 (ASWP…VGYF), 72–89 (LLGT…TMQV), and 100–120 (WGLA…AVHL). 2 residues coordinate Na(+): G79 and T82.

It belongs to the fluoride channel Fluc/FEX (TC 1.A.43) family.

Its subcellular location is the cell membrane. The catalysed reaction is fluoride(in) = fluoride(out). Its activity is regulated as follows. Na(+) is not transported, but it plays an essential structural role and its presence is essential for fluoride channel function. Functionally, fluoride-specific ion channel. Important for reducing fluoride concentration in the cell, thus reducing its toxicity. This Mycolicibacterium paratuberculosis (strain ATCC BAA-968 / K-10) (Mycobacterium paratuberculosis) protein is Fluoride-specific ion channel FluC 1.